We begin with the raw amino-acid sequence, 513 residues long: V-type proton ATPase subunit B, kidney isoform (513 aa).

Arg394 provides a ligand contact to ATP. The PDZ-binding motif lies at 510 to 513 (DTAL).

This sequence belongs to the ATPase alpha/beta chains family. V-ATPase is a heteromultimeric enzyme made up of two complexes: the ATP-hydrolytic V1 complex and the proton translocation V0 complex. The V1 complex consists of three catalytic AB heterodimers that form a heterohexamer, three peripheral stalks each consisting of EG heterodimers, one central rotor including subunits D and F, and the regulatory subunits C and H. The proton translocation complex V0 consists of the proton transport subunit a, a ring of proteolipid subunits c9c'', rotary subunit d, subunits e and f, and the accessory subunits ATP6AP1/Ac45 and ATP6AP2/PRR. Forms a complex with NHERF1 and SCL4A7. In terms of tissue distribution, kidney cortex and medulla.

It localises to the apical cell membrane. Its subcellular location is the basolateral cell membrane. Functionally, non-catalytic subunit of the V1 complex of vacuolar(H+)-ATPase (V-ATPase), a multisubunit enzyme composed of a peripheral complex (V1) that hydrolyzes ATP and a membrane integral complex (V0) that translocates protons. V-ATPase is responsible for acidifying and maintaining the pH of intracellular compartments and in some cell types, is targeted to the plasma membrane, where it is responsible for acidifying the extracellular environment. Essential for the proper assembly and activity of V-ATPase. In renal intercalated cells, mediates secretion of protons (H+) into the urine thereby ensuring correct urinary acidification. Required for optimal olfactory function by mediating the acidification of the nasal olfactory epithelium. This Bos taurus (Bovine) protein is V-type proton ATPase subunit B, kidney isoform (ATP6V1B1).